The primary structure comprises 166 residues: Large ribosomal subunit protein uL10 (166 aa).

This sequence belongs to the universal ribosomal protein uL10 family. Part of the ribosomal stalk of the 50S ribosomal subunit. The N-terminus interacts with L11 and the large rRNA to form the base of the stalk. The C-terminus forms an elongated spine to which L12 dimers bind in a sequential fashion forming a multimeric L10(L12)X complex.

Forms part of the ribosomal stalk, playing a central role in the interaction of the ribosome with GTP-bound translation factors. This chain is Large ribosomal subunit protein uL10, found in Streptococcus sanguinis (strain SK36).